We begin with the raw amino-acid sequence, 66 residues long: Protein translocase subunit SecE (66 aa).

Residues 41–61 (LAVMFIVGFVGFVIYILMEIL) form a helical membrane-spanning segment.

Belongs to the SecE/SEC61-gamma family. Component of the Sec protein translocase complex. Heterotrimer consisting of SecY (alpha), SecG (beta) and SecE (gamma) subunits. The heterotrimers can form oligomers, although 1 heterotrimer is thought to be able to translocate proteins. Interacts with the ribosome. May interact with SecDF, and other proteins may be involved.

The protein localises to the cell membrane. Functionally, essential subunit of the Sec protein translocation channel SecYEG. Clamps together the 2 halves of SecY. May contact the channel plug during translocation. The sequence is that of Protein translocase subunit SecE from Archaeoglobus fulgidus (strain ATCC 49558 / DSM 4304 / JCM 9628 / NBRC 100126 / VC-16).